We begin with the raw amino-acid sequence, 513 residues long: MPVEAPRPARHLEVERKFDVIESTVSPSFEGIAAVVRVEQSPTQQLDAVYFDTPSHDLARNQITLRRRTGGADAGWHLKLPAGPDKRTEMRAPLSASGDAVPAELLDVVLAIVRDQPVQPVARISTHRESQILYGAGGDALAEFCNDDVTAWSAGAFHAAGAADNGPAEQQWREWELELVTTDGTADTKLLDRLANRLLDAGAAPAGHGSKLARVLGATSPGELPNGPQPPADPVHRAVSEQVEQLLLWDRAVRADAYDAVHQMRVTTRKIRSLLTDSQESFGLKESAWVIDELRELADVLGVARDAEVLGDRYQRELDALAPELVRGRVRERLVDGARRRYQTGLRRSLIALRSQRYFRLLDALDALVSERAHATSGEESAPVTIDAAYRRVRKAAKAAKTAGDQAGDHHRDEALHLIRKRAKRLRYTAAATGADNVSQEAKVIQTLLGDHQDSVVSREHLIQQAIAANTAGEDTFTYGLLYQQEADLAERCREQLEAALRKLDKAVRKARD.

One can recognise a CYTH domain in the interval 11–219; it reads HLEVERKFDV…SKLARVLGAT (209 aa). The 279-residue stretch at 228–506 folds into the CHAD domain; that stretch reads PQPPADPVHR…LEAALRKLDK (279 aa).

This is an uncharacterized protein from Mycobacterium tuberculosis (strain ATCC 25618 / H37Rv).